Here is a 735-residue protein sequence, read N- to C-terminus: 1,4-alpha-glucan branching enzyme GlgB (735 aa).

Catalysis depends on D418, which acts as the Nucleophile. Residue E471 is the Proton donor of the active site.

Belongs to the glycosyl hydrolase 13 family. GlgB subfamily. As to quaternary structure, monomer.

The enzyme catalyses Transfers a segment of a (1-&gt;4)-alpha-D-glucan chain to a primary hydroxy group in a similar glucan chain.. It functions in the pathway glycan biosynthesis; glycogen biosynthesis. In terms of biological role, catalyzes the formation of the alpha-1,6-glucosidic linkages in glycogen by scission of a 1,4-alpha-linked oligosaccharide from growing alpha-1,4-glucan chains and the subsequent attachment of the oligosaccharide to the alpha-1,6 position. This chain is 1,4-alpha-glucan branching enzyme GlgB, found in Agrobacterium fabrum (strain C58 / ATCC 33970) (Agrobacterium tumefaciens (strain C58)).